The following is a 263-amino-acid chain: MNSCQQKAMEKLLHGHGCANQLLIMDQTESDSSMEREDLAKSVLHCFSDALSILIDTNDHQDDQSNNSSPQDSSPVLESSRKPLHKRGRKTSMAESSDYHRHESSTPIYHDGFLWRKYGQKQIKESEYQRSYYKCAYTKDQNCEAKKQVQKIQHNPPLYSTTYFGQHICQLHQAYATFPIDTSDFEEHEGSHMIRFGHPNISFSSSTSNLRQHQNHQDRIKDEYMKPVIAEDWSPSQWMSSEVALAVEAFEFNPFWTSHDLSS.

Residues 59–104 (DHQDDQSNNSSPQDSSPVLESSRKPLHKRGRKTSMAESSDYHRHES) are disordered. Over residues 64–74 (QSNNSSPQDSS) the composition is skewed to low complexity. A DNA-binding region (WRKY) is located at residues 104–174 (SSTPIYHDGF…GQHICQLHQA (71 aa)).

Belongs to the WRKY group III family.

The protein localises to the nucleus. Its function is as follows. Transcription factor. Interacts specifically with the W box (5'-(T)TGAC[CT]-3'), a frequently occurring elicitor-responsive cis-acting element. This chain is Probable WRKY transcription factor 62 (WRKY62), found in Arabidopsis thaliana (Mouse-ear cress).